A 334-amino-acid chain; its full sequence is Mitochondrial glycine transporter (334 aa).

Solcar repeat units lie at residues 10–94 (SKSS…IRQA), 127–211 (LSNT…FKRR), and 234–318 (RAAA…LIMR). A run of 6 helical transmembrane segments spans residues 16–41 (FVAG…TRVQ), 69–95 (GTVP…RQAA), 133–158 (LLAG…VRYE), 186–209 (GFGA…EQFK), 238–264 (VNFS…KTRI), and 293–311 (GLGL…AWTL).

This sequence belongs to the mitochondrial carrier (TC 2.A.29) family. SLC25A38 subfamily.

The protein resides in the mitochondrion inner membrane. It catalyses the reaction glycine(in) = glycine(out). Its function is as follows. Mitochondrial glycine transporter that imports glycine into the mitochondrial matrix. Plays an important role in providing glycine for the first enzymatic step in heme biosynthesis, the condensation of glycine with succinyl-CoA to produce 5-aminolevulinate (ALA) in the mitochondrial matrix. The protein is Mitochondrial glycine transporter of Pyricularia oryzae (strain 70-15 / ATCC MYA-4617 / FGSC 8958) (Rice blast fungus).